The chain runs to 238 residues: 2-C-methyl-D-erythritol 4-phosphate cytidylyltransferase (238 aa).

This sequence belongs to the IspD/TarI cytidylyltransferase family. IspD subfamily.

It carries out the reaction 2-C-methyl-D-erythritol 4-phosphate + CTP + H(+) = 4-CDP-2-C-methyl-D-erythritol + diphosphate. It participates in isoprenoid biosynthesis; isopentenyl diphosphate biosynthesis via DXP pathway; isopentenyl diphosphate from 1-deoxy-D-xylulose 5-phosphate: step 2/6. In terms of biological role, catalyzes the formation of 4-diphosphocytidyl-2-C-methyl-D-erythritol from CTP and 2-C-methyl-D-erythritol 4-phosphate (MEP). The chain is 2-C-methyl-D-erythritol 4-phosphate cytidylyltransferase from Pelotomaculum thermopropionicum (strain DSM 13744 / JCM 10971 / SI).